Reading from the N-terminus, the 435-residue chain is Glutamine synthetase (435 aa).

One can recognise a GS beta-grasp domain in the interval 12–94; that stretch reads KSIKYFMISY…VAADCVMDDR (83 aa). The 336-residue stretch at 100-435 folds into the GS catalytic domain; that stretch reads PRVVLKRLVA…QWERDSTLDI (336 aa). 4 residues coordinate Mg(2+): Glu-123, Glu-125, Glu-180, and Glu-187. Gly-232 lines the L-glutamate pocket. Position 236 (His-236) interacts with Mg(2+). Ser-240 serves as a coordination point for ATP. The L-glutamate site is built by Arg-291 and Arg-315. Positions 315 and 320 each coordinate ATP. Glu-328 contributes to the Mg(2+) binding site. Residue Arg-330 coordinates L-glutamate.

Belongs to the glutamine synthetase family. In terms of assembly, homooctamer. The cofactor is Mg(2+).

The catalysed reaction is L-glutamate + NH4(+) + ATP = L-glutamine + ADP + phosphate + H(+). Catalyzes the ATP-dependent biosynthesis of glutamine from glutamate and ammonia. This is Glutamine synthetase from Rhizobium leguminosarum bv. phaseoli.